We begin with the raw amino-acid sequence, 480 residues long: Probable cyclodipeptide synthase PUL1 (480 aa).

The protein operates within siderophore biosynthesis. Its function is as follows. Probable cyclodipeptide synthase; part of the PUL gene cluster that mediates the formation of pulcherrimin, a red iron-containing pigment composed of two cyclized and modified leucine molecules that acts as a siderophore, a chelator that binds iron outside the cell for subsequent uptake. Two leucine molecules are cyclized via a cyclodipeptide synthase, and the resulting diketopiperazine is oxidized by a cytochrome P450 monooxygenase to generate pulcherriminic acid (PA), which can then spontaneously bind iron to form pulcherrimin. The probable cyclodipeptide synthase PUL1 and the cytochrome P450 monooxygenase PUL2 encode the enzymes responsible for the two-step pulcherrimin biosynthesis pathway. The chain is Probable cyclodipeptide synthase PUL1 from Kluyveromyces lactis (strain ATCC 8585 / CBS 2359 / DSM 70799 / NBRC 1267 / NRRL Y-1140 / WM37) (Yeast).